Reading from the N-terminus, the 592-residue chain is V-type ATP synthase alpha chain 1 (592 aa).

Residue 233–240 (GPFGSGKT) coordinates ATP.

This sequence belongs to the ATPase alpha/beta chains family.

It catalyses the reaction ATP + H2O + 4 H(+)(in) = ADP + phosphate + 5 H(+)(out). Functionally, produces ATP from ADP in the presence of a proton gradient across the membrane. The V-type alpha chain is a catalytic subunit. The protein is V-type ATP synthase alpha chain 1 of Clostridium tetani (strain Massachusetts / E88).